The sequence spans 807 residues: Glycerol-3-phosphate acyltransferase (807 aa).

The short motif at 308–313 (CHRSHM) is the HXXXXD motif element.

It belongs to the GPAT/DAPAT family.

Its subcellular location is the cell inner membrane. The enzyme catalyses sn-glycerol 3-phosphate + an acyl-CoA = a 1-acyl-sn-glycero-3-phosphate + CoA. The protein operates within phospholipid metabolism; CDP-diacylglycerol biosynthesis; CDP-diacylglycerol from sn-glycerol 3-phosphate: step 1/3. The sequence is that of Glycerol-3-phosphate acyltransferase from Shewanella frigidimarina (strain NCIMB 400).